Consider the following 289-residue polypeptide: Rhodopsin (289 aa).

The Extracellular portion of the chain corresponds to 1–7; sequence YLVSPAA. A helical transmembrane segment spans residues 8 to 32; it reads YAALGAYMFLLILIGFPVNFLTLYV. Residues 33-44 are Cytoplasmic-facing; that stretch reads TLEHKKLRTPLN. A helical transmembrane segment spans residues 45-67; it reads YILLNLAVADLFMVLGGFTTTMY. Topologically, residues 68-81 are extracellular; that stretch reads TSMHGYFVLGRLGC. Residues Cys81 and Cys158 are joined by a disulfide bond. A helical membrane pass occupies residues 82 to 104; sequence NLEGFFATLGGEIALWSLVVLAI. A 'Ionic lock' involved in activated form stabilization motif is present at residues 105–107; sequence ERW. Residues 105 to 123 are Cytoplasmic-facing; that stretch reads ERWIVVCKPISKFRFTEDN. The helical transmembrane segment at 124 to 144 threads the bilayer; it reads AIMGLAFSWVMALACAVPPLV. At 145–173 the chain is on the extracellular side; that stretch reads GWLRYIPEGMQCTCGVDYYTRAEGFDNES. Residue Asn171 is glycosylated (N-linked (GlcNAc...) asparagine). The helical transmembrane segment at 174–195 threads the bilayer; that stretch reads FVIYMFIVHFLIPLSVIFFCYG. Residues 196-223 lie on the Cytoplasmic side of the membrane; sequence RLLCAVKEAAAAQQESETTQRAEKEVSR. Residues 224-245 traverse the membrane as a helical segment; that stretch reads MVVIMVIGFLVCWLPYASVAWW. At 246-257 the chain is on the extracellular side; sequence IFCNQGSDFGPI. Residues 258-279 traverse the membrane as a helical segment; sequence FMTLPSFFAKRPAIYNPMIYIC. The residue at position 267 (Lys267) is an N6-(retinylidene)lysine. Residues 280–289 lie on the Cytoplasmic side of the membrane; the sequence is MNKQFRHCMI.

This sequence belongs to the G-protein coupled receptor 1 family. Opsin subfamily. Post-translationally, phosphorylated on some or all of the serine and threonine residues present in the C-terminal region. Contains one covalently linked retinal chromophore.

It localises to the membrane. The protein resides in the cell projection. The protein localises to the cilium. It is found in the photoreceptor outer segment. Its function is as follows. Photoreceptor required for image-forming vision at low light intensity. While most salt water fish species use retinal as chromophore, most freshwater fish use 3-dehydroretinal, or a mixture of retinal and 3-dehydroretinal. Light-induced isomerization of 11-cis to all-trans retinal triggers a conformational change that activates signaling via G-proteins. Subsequent receptor phosphorylation mediates displacement of the bound G-protein alpha subunit by arrestin and terminates signaling. This Batrachocottus nikolskii (Fat sculpin) protein is Rhodopsin (rho).